We begin with the raw amino-acid sequence, 516 residues long: Exodeoxyribonuclease 7 large subunit (516 aa).

The protein belongs to the XseA family. In terms of assembly, heterooligomer composed of large and small subunits.

It localises to the cytoplasm. The enzyme catalyses Exonucleolytic cleavage in either 5'- to 3'- or 3'- to 5'-direction to yield nucleoside 5'-phosphates.. Its function is as follows. Bidirectionally degrades single-stranded DNA into large acid-insoluble oligonucleotides, which are then degraded further into small acid-soluble oligonucleotides. The polypeptide is Exodeoxyribonuclease 7 large subunit (Chlamydia trachomatis serovar A (strain ATCC VR-571B / DSM 19440 / HAR-13)).